The chain runs to 199 residues: Pro-thyrotropin-releasing hormone (199 aa).

Positions 1-22 (MRAVCVFVLACVAVSGAPGVRG) are cleaved as a signal peptide. The tract at residues 48-90 (EEQNSENDQPEWMEKRQHPGKRQHPGKREEDLEPEVEMERWRR) is disordered. Gln-64 is subject to Pyrrolidone carboxylic acid. A Proline amide modification is found at Pro-66. Gln-70 carries the post-translational modification Pyrrolidone carboxylic acid. The residue at position 72 (Pro-72) is a Proline amide. Gln-91 is modified (pyrrolidone carboxylic acid). Pro-93 is modified (proline amide). The residue at position 117 (Gln-117) is a Pyrrolidone carboxylic acid. Pro-119 is subject to Proline amide. 2 disordered regions span residues 129-160 (KRQH…RRCE) and 175-199 (TSGA…PGLE). Gln-131 carries the pyrrolidone carboxylic acid modification. Proline amide is present on Pro-133. Composition is skewed to basic and acidic residues over residues 147-160 (ELEK…RRCE) and 179-190 (PEKRQHPGRRAE). A Pyrrolidone carboxylic acid modification is found at Gln-152. Proline amide is present on Pro-154. Gln-183 carries the post-translational modification Pyrrolidone carboxylic acid. Residue Pro-185 is modified to Proline amide.

The protein belongs to the TRH family.

Its subcellular location is the secreted. In terms of biological role, functions as a regulator of the biosynthesis of TSH in the anterior pituitary gland and as a neurotransmitter/ neuromodulator in the central and peripheral nervous systems. The chain is Pro-thyrotropin-releasing hormone (trh) from Danio rerio (Zebrafish).